The primary structure comprises 289 residues: tRNA pseudouridine synthase A (289 aa).

Asp67 acts as the Nucleophile in catalysis. Tyr125 is a substrate binding site.

It belongs to the tRNA pseudouridine synthase TruA family. Homodimer.

It carries out the reaction uridine(38/39/40) in tRNA = pseudouridine(38/39/40) in tRNA. Functionally, formation of pseudouridine at positions 38, 39 and 40 in the anticodon stem and loop of transfer RNAs. This chain is tRNA pseudouridine synthase A, found in Prochlorococcus marinus (strain MIT 9211).